We begin with the raw amino-acid sequence, 668 residues long: Nuclear pore complex protein Nup75 (668 aa).

This sequence belongs to the nucleoporin Nup85 family. As to quaternary structure, component of the nuclear pore complex (NPC). Component of the NPC Nup107-160 subcomplex.

Its subcellular location is the nucleus. The protein localises to the nuclear pore complex. It localises to the nucleus membrane. Functionally, component of the nuclear pore complex (NPC) that seems to be required for NPC assembly and maintenance. Required for nuclear import of phosphorylated Mad via importin msk. Has no role in classical nuclear localization signal (cNLS)-dependent nuclear import via importin-beta. Facilitates the interaction between Nup93 and sec13 with msk. This is Nuclear pore complex protein Nup75 from Drosophila melanogaster (Fruit fly).